A 98-amino-acid polypeptide reads, in one-letter code: Large ribosomal subunit protein bL27 (98 aa).

Residues 1–11 (MASKASGGSTR) show a composition bias toward polar residues. The disordered stretch occupies residues 1 to 20 (MASKASGGSTRNGRDSISKR).

This sequence belongs to the bacterial ribosomal protein bL27 family.

This Aquifex aeolicus (strain VF5) protein is Large ribosomal subunit protein bL27.